Here is a 263-residue protein sequence, read N- to C-terminus: tRNA (guanine-N(1)-)-methyltransferase (263 aa).

S-adenosyl-L-methionine is bound by residues G113 and 137 to 142; that span reads LGDYVL.

This sequence belongs to the RNA methyltransferase TrmD family. In terms of assembly, homodimer.

It is found in the cytoplasm. It carries out the reaction guanosine(37) in tRNA + S-adenosyl-L-methionine = N(1)-methylguanosine(37) in tRNA + S-adenosyl-L-homocysteine + H(+). Its function is as follows. Specifically methylates guanosine-37 in various tRNAs. This Renibacterium salmoninarum (strain ATCC 33209 / DSM 20767 / JCM 11484 / NBRC 15589 / NCIMB 2235) protein is tRNA (guanine-N(1)-)-methyltransferase.